A 145-amino-acid polypeptide reads, in one-letter code: D-aminoacyl-tRNA deacylase (145 aa).

The Gly-cisPro motif, important for rejection of L-amino acids signature appears at 137-138 (GP).

Belongs to the DTD family. In terms of assembly, homodimer.

The protein resides in the cytoplasm. It carries out the reaction glycyl-tRNA(Ala) + H2O = tRNA(Ala) + glycine + H(+). It catalyses the reaction a D-aminoacyl-tRNA + H2O = a tRNA + a D-alpha-amino acid + H(+). Its function is as follows. An aminoacyl-tRNA editing enzyme that deacylates mischarged D-aminoacyl-tRNAs. Also deacylates mischarged glycyl-tRNA(Ala), protecting cells against glycine mischarging by AlaRS. Acts via tRNA-based rather than protein-based catalysis; rejects L-amino acids rather than detecting D-amino acids in the active site. By recycling D-aminoacyl-tRNA to D-amino acids and free tRNA molecules, this enzyme counteracts the toxicity associated with the formation of D-aminoacyl-tRNA entities in vivo and helps enforce protein L-homochirality. The protein is D-aminoacyl-tRNA deacylase of Shewanella putrefaciens (strain CN-32 / ATCC BAA-453).